A 181-amino-acid chain; its full sequence is 6,7-dimethyl-8-ribityllumazine synthase 2 (181 aa).

A disordered region spans residues 1–23 (MSLPMTETVTDPAETAPPTAERS). 5-amino-6-(D-ribitylamino)uracil contacts are provided by residues Trp-40, 74–76 (SFE), 98–100 (LVV), and Ser-129.

It belongs to the DMRL synthase family.

It catalyses the reaction (2S)-2-hydroxy-3-oxobutyl phosphate + 5-amino-6-(D-ribitylamino)uracil = 6,7-dimethyl-8-(1-D-ribityl)lumazine + phosphate + 2 H2O + H(+). The protein operates within cofactor biosynthesis; riboflavin biosynthesis; riboflavin from 2-hydroxy-3-oxobutyl phosphate and 5-amino-6-(D-ribitylamino)uracil: step 1/2. Catalyzes the formation of 6,7-dimethyl-8-ribityllumazine by condensation of 5-amino-6-(D-ribitylamino)uracil with 3,4-dihydroxy-2-butanone 4-phosphate. This is the penultimate step in the biosynthesis of riboflavin. In Rhodopseudomonas palustris (strain ATCC BAA-98 / CGA009), this protein is 6,7-dimethyl-8-ribityllumazine synthase 2.